Reading from the N-terminus, the 307-residue chain is Probable transposase for transposon Tn903 (307 aa).

Its function is as follows. Required for transposition of transposon Tn903. This is Probable transposase for transposon Tn903 from Escherichia coli.